The chain runs to 347 residues: Sesquiterpene synthase M422DRAFT_47084 (347 aa).

The Mg(2+) site is built by aspartate 93, asparagine 228, serine 232, and glutamate 236. The short motif at 93 to 97 (DEYTD) is the DDXXD motif element. Residues arginine 318 and tyrosine 319 each contribute to the (2E,6E)-farnesyl diphosphate site.

This sequence belongs to the terpene synthase family. Requires Mg(2+) as cofactor.

The catalysed reaction is (2E,6E)-farnesyl diphosphate = viridiflorene + diphosphate. Terpene cyclase that catalyzes the cyclization of farnesyl diphosphate (FPP) to viridiflorene and viridiflorol. This Sphaerobolus stellatus (strain SS14) protein is Sesquiterpene synthase M422DRAFT_47084.